A 443-amino-acid polypeptide reads, in one-letter code: Tol-Pal system protein TolB (443 aa).

A signal peptide spans Met-1–Ala-33.

It belongs to the TolB family. As to quaternary structure, the Tol-Pal system is composed of five core proteins: the inner membrane proteins TolA, TolQ and TolR, the periplasmic protein TolB and the outer membrane protein Pal. They form a network linking the inner and outer membranes and the peptidoglycan layer.

The protein localises to the periplasm. Its function is as follows. Part of the Tol-Pal system, which plays a role in outer membrane invagination during cell division and is important for maintaining outer membrane integrity. The sequence is that of Tol-Pal system protein TolB from Brucella ovis (strain ATCC 25840 / 63/290 / NCTC 10512).